The primary structure comprises 777 residues: MFLVLVLLTGLGRLYAGNNPRKTFVQTTVPERISSVDTRRHLEHNVAYNITLKGKSYVVRLKKESFLSSGSVIYFYDNRGVQRSQPLLPEMDCSYSGYVAGFPHSRVVFATCLGLRGVIQFENVSYAIEPLEVLSGFTHMIYEENNDNTHVPLFGKNNSYARIHNLESQGRRSVHKTTVSKLSPRYIDMYIVVNKNLFDYLGSDIKTVTQKIIQVIGLVNAMFTQLKLHVLISSIEIWSRSNKVTNTRRPDDDLFRFSDWKRKHVSLKSHYVAYLLTFDKYPESIGATFPENICNEEYASGIAVYPAGLSLESFAVIIVQLLSLSAGVMYDTSDSCYCSTDVCTMTQEAVFASGLKDFSTCSMDNFKYFASQYGLTCLRNTSYDMPIYKQFPPRRRRICGNSIREEGEECDCGTLRNCTHKKCCDPMQCRMKKGAKCGTGPCCTVDCQFQKANVLCRKSVDKDCDFDEYCNGRSGDCVHDTYAQNGHFCDSGGAFCFNGRCRTHDRQCQALIGGDSRGAPFACYDEVNSRGDVYGNCGRHQCYIQHALCGKLVCTWPHKQLVSRVNLSVVYAHVRDDICVATTKTVRKIIRDLSLTTVLLPEDRDETFVEDGTICGPGQYCDKWFCKEVQFINNGSCNAEIHCQGRGICNNLDNCHCHKGFVPPECAPKKGQFGSLDDGHLVETTKTSGFRKINMRRGYVVLSTKRFQLIFYIGIPVIIIVAAILIKQNQLGKLFCRGEKEHMSSVSEDGSRSVTLSATESKFPADTEHSNKEEDAQ.

Residues Met-1–Ala-16 form the signal peptide. Positions Gly-17–Tyr-142 are excised as a propeptide. Topologically, residues Gly-17–Arg-706 are extracellular. Asn-49 and Asn-123 each carry an N-linked (GlcNAc...) asparagine glycan. Positions Arg-185 to Ser-382 constitute a Peptidase M12B domain. Disulfide bonds link Cys-294-Cys-377, Cys-336-Cys-361, Cys-338-Cys-343, and Cys-456-Cys-477. The region spanning Arg-396–Asn-485 is the Disintegrin domain. The N-linked (GlcNAc...) asparagine glycan is linked to Asn-566. The EGF-like domain maps to Asn-633–Ala-667. 3 disulfide bridges follow: Cys-637/Cys-649, Cys-643/Cys-655, and Cys-657/Cys-666. Residues Phe-707–Lys-727 form a helical membrane-spanning segment. Residues Gln-728–Gln-777 are Cytoplasmic-facing. Residues Ser-744–Glu-760 show a composition bias toward polar residues. Residues Ser-744–Gln-777 form a disordered region. Residues Phe-763–Gln-777 show a composition bias toward basic and acidic residues.

As to quaternary structure, interacts with TEX101. Post-translationally, subject to proteolytic processing during epididymal transit of spermatozoa. Detected in testis.

It is found in the membrane. This is a non catalytic metalloprotease-like protein. May play a role in sperm-egg fusion. In Cavia porcellus (Guinea pig), this protein is Disintegrin and metalloproteinase domain-containing protein 5 (ADAM5).